A 340-amino-acid polypeptide reads, in one-letter code: Guanine nucleotide-binding protein G(I)/G(S)/G(T) subunit beta-3 (340 aa).

7 WD repeats span residues Gly53–Asp83, Leu95–Ser125, Ala141–Asp170, Gly182–Asp212, Gly224–Asp254, Ser268–Asp298, and Gly310–Asn340.

The protein belongs to the WD repeat G protein beta family. In terms of assembly, g proteins are composed of 3 units, alpha, beta and gamma. Interacts with RASD2. As to expression, expressed at a high level in the heart and at a much lower level in the brain.

Its function is as follows. Guanine nucleotide-binding proteins (G proteins) are involved as a modulator or transducer in various transmembrane signaling systems. The beta and gamma chains are required for the GTPase activity, for replacement of GDP by GTP, and for G protein-effector interaction. The chain is Guanine nucleotide-binding protein G(I)/G(S)/G(T) subunit beta-3 (Gnb3) from Rattus norvegicus (Rat).